Reading from the N-terminus, the 364-residue chain is Growth hormone secretagogue receptor type 1 (364 aa).

At 1–40 the chain is on the extracellular side; the sequence is MWNATPSEEPEPNVTLDLDWDASPGNDSLSDELLPLFPAP. Residues N13 and N26 are each glycosylated (N-linked (GlcNAc...) asparagine). The helical transmembrane segment at 41-66 threads the bilayer; that stretch reads LLAGVTATCVALFVVGISGNLLTMLV. The Cytoplasmic portion of the chain corresponds to 67–72; it reads VSRFRE. Residues 73-96 traverse the membrane as a helical segment; it reads LRTTTNLYLSSMAFSDLLIFLCMP. Residues 97–117 are Extracellular-facing; that stretch reads LDLVRLWQYRPWNFGDLLCKL. C115 and C197 form a disulfide bridge. Residues 118–139 traverse the membrane as a helical segment; sequence FQFVSESCTYATVLTITALSVE. Residues 140–162 are Cytoplasmic-facing; that stretch reads RYFAICFPLRAKVVVTKGRVKLV. A helical transmembrane segment spans residues 163–183; the sequence is ILVIWAVAFCSAGPIFVLVGV. At 184–211 the chain is on the extracellular side; it reads EHENGTDPRDTNECRATEFAVRSGLLTV. N187 carries an N-linked (GlcNAc...) asparagine glycan. A helical membrane pass occupies residues 212-235; it reads MVWVSSVFFFLPVFCLTVLYSLIG. The Cytoplasmic portion of the chain corresponds to 236-263; it reads RKLWRRRGDAAVGSSLRDQNHKQTVKML. The chain crosses the membrane as a helical span at residues 264–285; the sequence is AVVVFAFILCWLPFHVGRYLFS. Residues 286–302 are Extracellular-facing; the sequence is KSFEPGSLEIAQISQYC. Residues 303 to 326 traverse the membrane as a helical segment; the sequence is NLVSFVLFYLSAAINPILYNIMSK. Residues 327-364 are Cytoplasmic-facing; sequence KYRVAVFKLLGFESFSQRKLSTLKDESSRAWTKSSINT.

It belongs to the G-protein coupled receptor 1 family.

The protein localises to the cell membrane. Receptor for ghrelin, coupled to G-alpha-11 proteins. Stimulates growth hormone secretion. Also binds other growth hormone releasing peptides (GHRP) (e.g. Met-enkephalin and GHRP-6) as well as non-peptide, low molecular weight secretagogues (e.g. L-692,429, MK-0677, adenosine). This chain is Growth hormone secretagogue receptor type 1 (Ghsr), found in Mus musculus (Mouse).